We begin with the raw amino-acid sequence, 501 residues long: MTLVDVRTPDPKRFIPGATGDWEIVIGLEVHAQVLSNSKLFSGASTTFGNAPNSNVSLVDAAMPGMLPVINEECVKQAVRTGLGLKAKINNRSIFDRKNYFYPDLPQGYQISQFKDPIVGEGTITISLGPDRQGNFEDIEIGIERLHLEQDAGKSMHDQHPTMSFVDLNRSGVALMEIVSKPDMRSSDEAKGYLTKLRSIVRYLGTCDGNMDEGSMRADVNVSVRRPGEGFGTRCEIKNVNSIRFVGQAIEYEARRQVAILEDGGVIDQETRLFDPGKGETRSMRSKEDAHDYRYFPDPDLLPLEFDDAFVEALKVDLPELPDDKKARFVADLGLSVYDASILVSEKAIADYYEAVAAGRDAKTAANWVINDLLGALNKFGKDIETTPVSPDQLGGIIDLIKAETISGKIAKDLFEIVWNEGGNPAEIVEARGMKQVTDTGAIEKAVDDIIAANPDQVEKVKAKPTLAGWFVGQVMKATGGKANPQAVQALVKAKLGIEDE.

This sequence belongs to the GatB/GatE family. GatB subfamily. As to quaternary structure, heterotrimer of A, B and C subunits.

It catalyses the reaction L-glutamyl-tRNA(Gln) + L-glutamine + ATP + H2O = L-glutaminyl-tRNA(Gln) + L-glutamate + ADP + phosphate + H(+). It carries out the reaction L-aspartyl-tRNA(Asn) + L-glutamine + ATP + H2O = L-asparaginyl-tRNA(Asn) + L-glutamate + ADP + phosphate + 2 H(+). Its function is as follows. Allows the formation of correctly charged Asn-tRNA(Asn) or Gln-tRNA(Gln) through the transamidation of misacylated Asp-tRNA(Asn) or Glu-tRNA(Gln) in organisms which lack either or both of asparaginyl-tRNA or glutaminyl-tRNA synthetases. The reaction takes place in the presence of glutamine and ATP through an activated phospho-Asp-tRNA(Asn) or phospho-Glu-tRNA(Gln). This chain is Aspartyl/glutamyl-tRNA(Asn/Gln) amidotransferase subunit B, found in Agrobacterium fabrum (strain C58 / ATCC 33970) (Agrobacterium tumefaciens (strain C58)).